The primary structure comprises 365 residues: Uroporphyrinogen decarboxylase (365 aa).

Substrate is bound by residues 27-31 (RQAGR), Asp77, Tyr154, Thr209, and His327.

Belongs to the uroporphyrinogen decarboxylase family. As to quaternary structure, homodimer.

Its subcellular location is the cytoplasm. The enzyme catalyses uroporphyrinogen III + 4 H(+) = coproporphyrinogen III + 4 CO2. Its pathway is porphyrin-containing compound metabolism; protoporphyrin-IX biosynthesis; coproporphyrinogen-III from 5-aminolevulinate: step 4/4. Its function is as follows. Catalyzes the decarboxylation of four acetate groups of uroporphyrinogen-III to yield coproporphyrinogen-III. In Nitrosospira multiformis (strain ATCC 25196 / NCIMB 11849 / C 71), this protein is Uroporphyrinogen decarboxylase.